The sequence spans 416 residues: Gamma-glutamyl phosphate reductase (416 aa).

Belongs to the gamma-glutamyl phosphate reductase family.

The protein localises to the cytoplasm. The enzyme catalyses L-glutamate 5-semialdehyde + phosphate + NADP(+) = L-glutamyl 5-phosphate + NADPH + H(+). The protein operates within amino-acid biosynthesis; L-proline biosynthesis; L-glutamate 5-semialdehyde from L-glutamate: step 2/2. Functionally, catalyzes the NADPH-dependent reduction of L-glutamate 5-phosphate into L-glutamate 5-semialdehyde and phosphate. The product spontaneously undergoes cyclization to form 1-pyrroline-5-carboxylate. This Streptococcus mutans serotype c (strain ATCC 700610 / UA159) protein is Gamma-glutamyl phosphate reductase.